We begin with the raw amino-acid sequence, 462 residues long: Chitinase-like mite allergen Der f 18.0101 (462 aa).

Residues 1–25 form the signal peptide; it reads MTRFSLTVLAVLAACFGSNIRPNVA. Positions 29–378 constitute a GH18 domain; that stretch reads PKTVCYYESW…HAIQSNYYHG (350 aa). A disulfide bond links cysteine 33 and cysteine 58. N-linked (GlcNAc...) asparagine glycosylation is present at asparagine 338. Residues 404–462 form the Chitin-binding type-2 domain; sequence VFHCHEEGFFRDKTYCATYYECKKGDFGLEKTVHHCANHLQAFDEVSRTCIDHTKIPGC. Cysteine 439 and cysteine 453 are joined by a disulfide.

Belongs to the glycosyl hydrolase 18 family. Chitinase class II subfamily. Expressed in the upper digestive tract. Staining is observed in the ventriculus, and in very rare individuals, also in the intestine or esophagus. No expression in fecal pellets neither inside the rectum nor defecated outside of the body.

The protein resides in the secreted. Probably a non-catalytic chitinase-like protein, which binds to insoluble chitin and enhances the activity of the catalytic chitinases. Has weak chitin-binding activity. This Dermatophagoides farinae (American house dust mite) protein is Chitinase-like mite allergen Der f 18.0101.